Here is a 232-residue protein sequence, read N- to C-terminus: NAD(P)H-quinone oxidoreductase subunit K 1 (232 aa).

The [4Fe-4S] cluster site is built by Cys-49, Cys-50, Cys-114, and Cys-145.

Belongs to the complex I 20 kDa subunit family. NDH-1 can be composed of about 15 different subunits; different subcomplexes with different compositions have been identified which probably have different functions. [4Fe-4S] cluster serves as cofactor.

The protein resides in the cell inner membrane. The catalysed reaction is a plastoquinone + NADH + (n+1) H(+)(in) = a plastoquinol + NAD(+) + n H(+)(out). It carries out the reaction a plastoquinone + NADPH + (n+1) H(+)(in) = a plastoquinol + NADP(+) + n H(+)(out). NDH-1 shuttles electrons from an unknown electron donor, via FMN and iron-sulfur (Fe-S) centers, to quinones in the respiratory and/or the photosynthetic chain. The immediate electron acceptor for the enzyme in this species is believed to be plastoquinone. Couples the redox reaction to proton translocation, and thus conserves the redox energy in a proton gradient. Cyanobacterial NDH-1 also plays a role in inorganic carbon-concentration. In Gloeobacter violaceus (strain ATCC 29082 / PCC 7421), this protein is NAD(P)H-quinone oxidoreductase subunit K 1.